Consider the following 1286-residue polypeptide: CLIP-associating protein 2 (1286 aa).

Residues 1 to 40 (MRRLICKRICDYKSFDDEESVDGNRPSSAASAFKVPAPKT) are golgi localization. Phosphoserine is present on residues S14 and S20. The segment at 17–67 (DEESVDGNRPSSAASAFKVPAPKTPGNPVSSARKPGSAGGPKVGGPSKEGG) is disordered. Gly residues predominate over residues 53–67 (SAGGPKVGGPSKEGG). The interval 66 to 317 (GGAGAVDEDD…KSLQTYLKSS (252 aa)) is TOG 1. 3 HEAT repeats span residues 179–214 (HGAEAIVPTLFNLVPNSAKVMATSGCAAIRFIIRHT), 215–251 (HVPRLIPLITSNCTSKSVPVRRRSFEFLDLLLQEWQT), and 256–293 (RHAAVLVETIKKGIHDADAEARVEARKTYMGLRNHFPG). The tract at residues 320–374 (VASLPQSDRSSSSSQESLNRPFSSKWSTANPSTVAGRVSVGGSKANPLPGSLQRS) is disordered. A phosphoserine mark is found at S322, S333, and S336. Residues 322–340 (SLPQSDRSSSSSQESLNRP) are compositionally biased toward low complexity. Over residues 341–352 (FSSKWSTANPST) the composition is skewed to polar residues. Phosphoserine occurs at positions 374, 376, and 413. The disordered stretch occupies residues 411–473 (YASLEDTSDK…GSRSGSPGRV (63 aa)). Basic and acidic residues predominate over residues 417-431 (TSDKMDGTASDDGRV). Positions 450 to 565 (RGRSRTKMVS…GPGYGISQSS (116 aa)) are interaction with microtubules, MAPRE1 and MAPRE3. Positions 459-473 (SQSQPGSRSGSPGRV) are enriched in low complexity. Phosphoserine occurs at positions 461, 465, 469, 484, and 495. Residues 493–564 (SASAQKRSKI…LGPGYGISQS (72 aa)) are disordered. The SXIP motif 1; mediates interaction with MAPRE1 and targeting to microtubule plus ends motif lies at 500–503 (SKIP). Phosphoserine is present on S513. Residues 523–526 (SRIP) carry the SXIP motif 2; mediates interaction with MAPRE1 and targeting to microtubule plus ends motif. S531, S535, S570, S572, S581, S614, and S620 each carry phosphoserine. Residues 605–616 (RRYESYGMHSDD) are compositionally biased toward basic and acidic residues. Residues 605–638 (RRYESYGMHSDDDANSDASSACSERSYSSRNGSI) are disordered. Over residues 620-634 (SDASSACSERSYSSR) the composition is skewed to low complexity. Residues 642–873 (MRQTEDVAEV…TKLLHNHLRN (232 aa)) form a TOG 2 region. HEAT repeat units follow at residues 702-739 (KVFSMFLETLVDFIQVHKDDLQDWLFVLLTQLLKKMGA) and 764-801 (LQFNILMRFTVDQTQTPSLKVKVAILKYIETLAKQMDP). T779 carries the phosphothreonine modification. The segment at 864 to 1286 (TKLLHNHLRN…DPTADVSGQS (423 aa)) is interaction with RSN and localization to the Golgi and kinetochores. Disordered stretches follow at residues 870-920 (HLRN…FDYD) and 944-989 (SFRS…SQPA). 2 stretches are compositionally biased toward polar residues: residues 872-884 (RNTGNGTQSSMGS) and 893-914 (SPANWSSPLTSPTNTSQNTLSP). At S884 the chain carries Phosphoserine. A phosphoserine mark is found at S944, S947, S1005, and S1021. Positions 947 to 964 (SQEDMSEPVRRDPKKEDG) are enriched in basic and acidic residues. The interval 1009–1286 (RDYNPYNYSD…DPTADVSGQS (278 aa)) is required for cortical localization. HEAT repeat units lie at residues 1046 to 1083 (LDHSDLVAELLKELSNHNERIEERKIALYELMKLTQEE), 1090 to 1127 (EHFKTILLLLLETLGDKEPTIRALALKVLKEILRHQPA), and 1208 to 1245 (MLLPEIMPGLIQGYDNSESSVRKACVFCLVAVHAVIGD).

This sequence belongs to the CLASP family. Interacts with microtubules. Interacts with MAPRE1; probably required for targeting to growing microtubule plus ends. Interacts with ERC1, MAPRE3 and PHLDB2. The interaction with ERC1 may be mediated by PHLDB2. Interacts with GCC2; recruits CLASP2 to Golgi membranes. Interacts with CLIP2 and RSN. Interacts with MACF1. Interacts with mtcl2. Interacts with MTCL1. Phosphorylated by GSK3B. Phosphorylation by GSK3B may negatively regulate binding to microtubule lattices in lamella. Isoform 2 is phosphorylated on Ser-241. In terms of tissue distribution, highly expressed in brain and at low levels in heart, kidney and lung.

The protein localises to the cytoplasm. It is found in the cytoskeleton. It localises to the microtubule organizing center. Its subcellular location is the centrosome. The protein resides in the chromosome. The protein localises to the centromere. It is found in the kinetochore. It localises to the spindle. Its subcellular location is the spindle pole. The protein resides in the golgi apparatus. The protein localises to the trans-Golgi network. It is found in the cell membrane. It localises to the cell projection. Its subcellular location is the ruffle membrane. The protein resides in the cell cortex. Its function is as follows. Microtubule plus-end tracking protein that promotes the stabilization of dynamic microtubules. Involved in the nucleation of noncentrosomal microtubules originating from the trans-Golgi network (TGN). Required for the polarization of the cytoplasmic microtubule arrays in migrating cells towards the leading edge of the cell. May act at the cell cortex to enhance the frequency of rescue of depolymerizing microtubules by attaching their plus-ends to cortical platforms composed of ERC1 and PHLDB2. This cortical microtubule stabilizing activity is regulated at least in part by phosphatidylinositol 3-kinase signaling. Also performs a similar stabilizing function at the kinetochore which is essential for the bipolar alignment of chromosomes on the mitotic spindle. Acts as a mediator of ERBB2-dependent stabilization of microtubules at the cell cortex. This chain is CLIP-associating protein 2 (Clasp2), found in Mus musculus (Mouse).